Here is a 675-residue protein sequence, read N- to C-terminus: Electrogenic aspartate/glutamate antiporter SLC25A13, mitochondrial (675 aa).

N-acetylalanine is present on A2. Residues 2 to 295 (AAAKVALTKR…TLADIERIAP (294 aa)) form a regulatory N-terminal domain region. Residues 2-331 (AAAKVALTKR…LLQVAESAYR (330 aa)) are Mitochondrial intermembrane-facing. 4 EF-hand domains span residues 51–86 (SQPN…SVLC), 87–122 (APDA…TTIH), 125–157 (IPFN…FLLE), and 158–193 (IQLE…IRPH). Ca(2+)-binding residues include D66, T68, D70, L72, and E77. Residues 296 to 311 (LEEGTLPFNLAEAQRQ) form a linker loop domain region. The tract at residues 321–612 (VLLQVAESAY…LQRWFYIDFG (292 aa)) is carrier domain. Solcar repeat units follow at residues 326-418 (AESA…VRDK), 426-510 (VPLA…VKAS), and 518-606 (VSPG…LQRW). The chain crosses the membrane as a helical span at residues 332-349 (FGLGSVAGAVGATAVYPI). At 350-392 (DLVKTRMQNQRSTGSFVGELMYKNSFDCFKKVLRYEGFFGLYR) the chain is on the mitochondrial matrix side. K353 and K372 each carry N6-acetyllysine. The chain crosses the membrane as a helical span at residues 393–412 (GLLPQLLGVAPEKAIKLTVN). Over 413–435 (DFVRDKFMHKDGSVPLAAEILAG) the chain is Mitochondrial intermembrane. The helical transmembrane segment at 436 to 449 (GCAGGSQVIFTNPL) threads the bilayer. The Mitochondrial matrix segment spans residues 450–484 (EIVKIRLQVAGEITTGPRVSALSVVRDLGFFGIYK). K453 is modified (N6-methyllysine). The residue at position 484 (K484) is an N6-acetyllysine; alternate. An N6-succinyllysine; alternate modification is found at K484. The chain crosses the membrane as a helical span at residues 485–504 (GAKACFLRDIPFSAIYFPCY). Topologically, residues 505–523 (AHVKASFANEDGQVSPGSL) are mitochondrial intermembrane. The helical transmembrane segment at 524 to 541 (LLAGAIAGMPAASLVTPA) threads the bilayer. The Mitochondrial matrix portion of the chain corresponds to 542-580 (DVIKTRLQVAARAGQTTYSGVIDCFRKILREEGPKALWK). K580 carries the N6-succinyllysine modification. A helical transmembrane segment spans residues 581–600 (GAGARVFRSSPQFGVTLLTY). Topologically, residues 601–675 (ELLQRWFYID…STSKAIGGGP (75 aa)) are mitochondrial intermembrane. The interval 613-675 (GVKPMGSEPV…STSKAIGGGP (63 aa)) is C-terminal domain. An N6-acetyllysine modification is found at K662. A Phosphoserine modification is found at S666.

The protein belongs to the mitochondrial carrier (TC 2.A.29) family. Homodimer (via N-terminus). In terms of tissue distribution, high levels in liver and low levels in kidney, pancreas, placenta, heart and brain.

It is found in the mitochondrion inner membrane. It catalyses the reaction L-aspartate(in) + L-glutamate(out) + H(+)(out) = L-aspartate(out) + L-glutamate(in) + H(+)(in). The catalysed reaction is 3-sulfino-L-alanine(out) + L-glutamate(in) + H(+)(in) = 3-sulfino-L-alanine(in) + L-glutamate(out) + H(+)(out). It carries out the reaction 3-sulfino-L-alanine(out) + L-aspartate(in) = 3-sulfino-L-alanine(in) + L-aspartate(out). Its activity is regulated as follows. Activated by calcium-binding in the mitochondrial intermembrane space. Inhibited by pyridoxal 5'-phosphate, bathophenathroline, mercurials, diethyl pyrocarbonate and N-ethylmaleimide. Functionally, mitochondrial electrogenic aspartate/glutamate antiporter that favors efflux of aspartate and entry of glutamate and proton within the mitochondria as part of the malate-aspartate shuttle. Also mediates the uptake of L-cysteinesulfinate (3-sulfino-L-alanine) by mitochondria in exchange of L-glutamate and proton. Can also exchange L-cysteinesulfinate with aspartate in their anionic form without any proton translocation. Lacks transport activity towards gamma-aminobutyric acid (GABA). This is Electrogenic aspartate/glutamate antiporter SLC25A13, mitochondrial from Homo sapiens (Human).